Reading from the N-terminus, the 3945-residue chain is MDFLRSLDWTQVIAGQYVSNPRFNISDYFEIVRQPGDGNCFYHSIAELTMPNKTDHSYHYIKRLTESAARKYYQEEPEARLVGLSLEDYLKRMLSDNEWGSTLEASMLAKEMGITIIIWTVAASDEVEAGIKFGDGDVFTAVNLLHSGQTHFDALRILPQFETDTREALSLMDRVIAVDQLTSSSSDELQDYEDLALALTSAEESNRRSSLDEVTLSKKQAEILRQKASQLSKLVNKSQNIPTRVGRVLDCMFNCKLCVEISADTLILRPESKEKIGEIMSLRQLGHKLLTRDKQIKQEFSRMKLYVTKDLLDHLDVGGLLRAAFPGTGIERHMQLLHSEMILDICTVSLGVMLSTFLYGSNNKNKKKFITNCLLSTALSGKKVYKVLGNLGNELLYKAPRKALATVCSALFGKQINKLQNCFRTISPVSLLALRNLDFDCLSVQDYNGMIENMSKLDNTDVEFNHREIADLNQLTSRLITLRKEKDTDLLKQWFPESDLTRRSIRNAANAEEFVISEFFKKKDIMKFISTSGRAMSAGKIGNVLSYAHNLYLSKSSLNMTSEDISQLLIEIKRLYALQEDSEVEPIAIICDGIESNMKQLFAILPPDCARECEVLFDDIRNSPTHSTAWKHALRLKGTAYEGLFANCYGWQYIPEDIKPSLTMLIQTLFPDKFEDFLDRTQLHPEFRDLTPDFSLTQKVHFKRNQIPSVENVQISIDATLPESVEAVPVTERKMFPLPETPLSEVHSIERIMENFTRLMHGGRLSTKKRDGDPAEQGNQQSITEHESSSISAFKDYGERGIVEENHMKFSGEDQLETRQLLLVEVGFQTDIDGKIRTDHKKWKDILKLLELLGIKCSFIACADCSSTPPDRWWITEDRVRVLKNSVSFLFNKLSRNSPTEVTDIVVGAISTQKVRSYLKAGTATKTPVSTKDVLETWEKMKEHILNRPTGLTLPTSLEQAMRKGLVEGVVISKEGSESCINMLKENLDRITDEFERTKFKHELTQNITTSEKMLLSWLSEDIKSSRCGECLSNIKKAVDETANLSEKIELLAYNLQLTNHCSNCHPNGVNISNTSNVCKRCPKIEVVSHCENKGFEDSNECLTDLDRLVRLTLPGKTEKERRVKRNVEYLIKLMMSMSGIDCIKYPTGQLITHGRVSAKHNDGNLKDRSDDDQRLAEKIDTVRKELSESKLKDYSTYARGVISNSLKNLSRQGKSKCSVPRSWLEKVLFDLKVPTKDEEVLINIRNSLKARSEFVRNNDKLLIRSKEELKKCFDVQSFKLKKNKQPVPFQVDCILFKEVAAECMKRYIGTPYEGIVDTLVSLINVLTRFTWFQEVVLYGKICETFLRCCTEFNRSGVKLVKIRHCNINLSVKLPSNKKENMLCCLYSGNMELLQGPFYLNRRQAVLGSSYLYIVITLYIQVLQQYRCLEVINSVSEKTLQDIENHSMTLLEDSFREITFALEGRFEESYKIRTSRCRASGNFLNRSSRDHFISVVSGLNLVYGFLIKDNLLANSQQQNKQLQMLRFGMLAGLSRLVCPNELGKKFSTSCRRIEDNIARLYLQTSIYCSVRDVEDNVKHWKQRDLCPEVTIPCFTVYGTFVNSDRQLIFDIYNVHIYNKEMDNFDEGCISVLEETAERHMLWELDLMNSLCSDEKKDTRTARLLLGCPNVRKAANREGKKLLKLNSDTSTDTQSIASEVSDRRSYSSSKSRIRSIFGRYNSQKKPFELRSGLEVFNDPFNDYQQAITDICQFSEYTPNKESILKDCLQIIRKNPSHTMGSFELIQAISEFGMSKFPPENIDKARRDPKNWVSISEVTETTSIVASPRTHMMLKDCFKIILGTENKKIVKMLRGKLKKLGAISTNIEIGKRDCLDLLSTVDGLTDQQKENIVNGIFEPSKLSFYHWKELVKKNIDEVLLTEDGNLIFCWLKTISSSVKGSLKKRLKFMNIHSPELMPENCLFSSEEFNELIKLKKLLLNEQQDEQELKQDLLISSWIKCITACKDFASINDKIQKFIYHLSEELYDIRLQHLELSKLKQEHPSVSFTKEEVLIKRLEKNFLKQHNLEIMETVNLVFFAALSAPWCLHYKALESYLVRHPEILDCGSKEDCKLTLLDLSVSKLLVCLYQKDDEELINSSSLKLGFLVKYVVTLFTSNGEPFSLSLNDGGLDLDLHKTTDEKLLHQTKIVFAKIGLSGNSYDFIWTTQMIANSNFNVCKRLTGRSTGERLPRSVRSKVIYEMVKLVGETGMAILQQLAFAQALNYEHRFYAVLAPKAQLGGARDLLVQETGTKVMHATTEMFSRNLLKTTSDDGLTNPHLKETILNVGLDCLANMRNLDGKPISEGSNLVNFYKVICISGDNTKWGPIHCCSFFSGMMQQVLKNVPDWCSFYKLTFIKNLCRQVEIPAGSIKKILNVLRYRLCSKGGVEQHSEEDLRRLLTDNLDSWDGNDTVKFLVTTYISKGLMALNSYNHMGQGIHHATSSVLTSLAAVLFEELAIFYLKRSLPQTTVHVEHAGSSDDYAKCIVVTGILSKELYSQYDETFWKHACRLKNFTAAVQRCCQMKDSAKTLVSDCFLEFYSEFMMGYRVTPAVIKFMFTGLINSSVTSPQSLMQACQVSSQQAMYNSVPLVTNTAFTLLRQQIFFNHVEDFIRRYGILTLGTLSPFGRLFVPTYSGLVSSAVALEDAEVIARAAQTLQMNSVSIQSSSLTTLDSLGRSRTSSTAEDSSSVSDTTAASHDSGSSSSSFSFELNRPLSETELQFIKALSSLKSTQACEVIQNRITGLYCNSNEGPLDRHNVIYSSRMADSCDWLKDGKRRGNLELANRIQSVLCILIAGYYRSFGGEGTEKQVKASLNRDDNKIIEDPMIQLIPEKLRRELERLGVSRMEVDELMPSISPDDTLAQLVAKKLISLNVSTEEYSAEVSRLKQTLTARNVLHGLAGGIKELSLPIYTIFMKSYFFKDNVFLSLTDRWSTKHSTNYRDSCGKQLKGRIITKYTHWLDTFLGCSVSINRHTTVKEPSLFNPNIRCVNLITFEDGLRELSVIQSHLKVFENEFTNLNLQFSDPNRQKLRIVESRPAESELEANRAVIVKTKLFSATEQVRLSNNPAVVMGYLLDESAISEVKPTKVDFSNLLKDRFKIMQFFPSVFTLIKMLTDESSDSEKSGLSPDLQQVARYSNHLTLLSRMIQQAKPTVTVFYMLKGNLMNTEPTVAELVSYGIKEGRFFRLSDTGVDASTYSVKYWKILHCISAIGCLPLSQADKSSLLMSFLNWRVNMDIRTSDCPLSSHEASILSEFDGQVIANILASELSSVKRDSEREGLTDLLDYLNSPTELLKKKPYLGTTCKFNTWGDSNRSGKFTYSSRSGESIGIFIAGKLHIHLSSESVALLCETERQVLSWMSKRRTEVITKEQHQLFLSLLPQSHECLQKHKDGSALSVIPDSSNPRLLKFVPLKKGLAVVKIKKQILTVKKQVVFDAESEPRLQWGHGCLSIVYDETDTQTTYHENLLKVKHLVDCSTDRKKLLPQSVFSDSKVVLSRIKFKTELLLNSLTLLHCFLKHAPSDAIMEVESKSSLLHKYLKSGGVRQRNTEVLFREKLNKVVIKDNLEQGVEEEIEFCNNLTKTVSENPLPLSCWSEVQNYIEDIGFNNVLVNIDRNTVKSELLWKFTLDTNVSTTSTIKDVRTLVSYVSTETIPKFLLAFLLYEEVLMNLINQCKAVKELINSTGLSDLELESLLTLCAFYFQSECSKRDGPRCSFAALLSLIHEDWQRIGKNILVRANNELGDVSLKVNIVLVPLKDMSKPKSERVVMARRSLNHALSLMFLDEMSLPELKSLSVNCKMGNFEGQECFEFTILKDNSARLDYNKLIDHCVDMEKKREAVRAVEDLILMLTGRAVKPSAVTQFVHGDEQCQEQISLDDLMANDTVTDFPDREAEALKTGNLGFNWDSD.

The tract at residues 1 to 28 is essential for the vOTU enzymatic activity; the sequence is MDFLRSLDWTQVIAGQYVSNPRFNISDY. The 130-residue stretch at 29–158 folds into the OTU domain; the sequence is FEIVRQPGDG…QTHFDALRIL (130 aa). Active-site for ubiquitin thioesterase activity residues include Cys40, His151, and Asp153. The interval 625 to 806 is endonuclease; the sequence is THSTAWKHAL…YGERGIVEEN (182 aa). Positions 632, 693, and 718 each coordinate Mn(2+). Lys734 serves as the catalytic For endonuclease activity. The interval 763–790 is disordered; it reads GRLSTKKRDGDPAEQGNQQSITEHESSS. The 210-residue stretch at 2342–2551 folds into the RdRp catalytic domain; sequence EGSNLVNFYK…WKHACRLKNF (210 aa). Asp2518 is a Mg(2+) binding site. The segment at 2712–2744 is disordered; that stretch reads LGRSRTSSTAEDSSSVSDTTAASHDSGSSSSSF. The segment covering 2715 to 2744 has biased composition (low complexity); the sequence is SRTSSTAEDSSSVSDTTAASHDSGSSSSSF.

The protein belongs to the Bunyavirales RNA polymerase family. In terms of assembly, interacts (via N-terminus) with host ISG15 (via C-terminus); the deISGylase activity of the viral protein interferes with antiviral signaling pathways mediated by NF-kappaB and IRF signalings. Interacts with host ubiquitin.

It catalyses the reaction Thiol-dependent hydrolysis of ester, thioester, amide, peptide and isopeptide bonds formed by the C-terminal Gly of ubiquitin (a 76-residue protein attached to proteins as an intracellular targeting signal).. The catalysed reaction is RNA(n) + a ribonucleoside 5'-triphosphate = RNA(n+1) + diphosphate. Displays RNA-directed RNA polymerase, deubiquitinating and deISGylase activities. RNA-dependent RNA polymerase is responsible for replication and transcription of the viral RNA genome. During transcription, synthesizes subgenomic RNAs and assures their capping by a cap-snatching mechanism, which involves the endonuclease activity cleaving the host capped pre-mRNAs. These short capped RNAs are then used as primers for viral transcription. The deubiquitinating and deISGylating activities specifically cleaves poly-ubiquitinated conjugates and ISG15 from RIG-I, interfering with antiviral signaling pathways mediated by NF-kappaB and IRF signalings. Deubiquitinates mono-ubiquitinated, K48- and K63-linked tetra-ubiquitinated molecules. Favors K63 poly-Ub linkage. The protein is RNA-directed RNA polymerase L (L) of Crimean-Congo hemorrhagic fever virus (strain Nigeria/IbAr10200/1970) (CCHFV).